Here is a 98-residue protein sequence, read N- to C-terminus: Small ribosomal subunit protein bS6c (98 aa).

Belongs to the bacterial ribosomal protein bS6 family.

The protein localises to the plastid. Its subcellular location is the chloroplast. Binds together with bS18 to 16S ribosomal RNA. In Phaeodactylum tricornutum (strain CCAP 1055/1), this protein is Small ribosomal subunit protein bS6c.